Reading from the N-terminus, the 293-residue chain is MTELGNDKAMNLLIITGMSGAGKTVAVQSLEDLGFFCVDNLPPVLIPKFAELVKQSGGSIERVALVIDLRGREFFENLAVTMESLNQMNGLSYHILYLDANDQTLVSRYKETRRRHPLSPNGSPLEGIHAERRLLEEMKGWAHQIIDTSQMKPVQLREKIINQYGQQGSPLTINVLSFGFKYGAPIDADLMFDVRFLPNPHYVEDLRPKTGCDPDVAEYVMQHKDTKEFLEKLTDFLGYTLPHYQREGKSQLVIGIGCTGGKHRSVAIAEHLGEAFGKDFSVRVSHRDMEKNK.

17–24 (GMSGAGKT) provides a ligand contact to ATP. 68-71 (DLRG) lines the GTP pocket.

It belongs to the RapZ-like family.

In terms of biological role, displays ATPase and GTPase activities. In Brevibacillus brevis (strain 47 / JCM 6285 / NBRC 100599), this protein is Nucleotide-binding protein BBR47_52620.